The following is a 414-amino-acid chain: Na(+)-translocating NADH-quinone reductase subunit B (414 aa).

The next 4 helical transmembrane spans lie at 56–76 (IMIMVWLAVFPAMFWGMYNVG), 82–104 (ALNHLYSGAELATVISGNWHYWL), 129–149 (FLPIYATVFLVGGFWEVLFCM), and 164–184 (ILFALIVPPTLPLWQAALGIT). T236 bears the FMN phosphoryl threonine mark. Helical transmembrane passes span 275–295 (VSTLALAIGAAFIVYMGIASW), 297–317 (IIAGVMVGMIAISTLFNVIGS), 325–345 (MPWHWHLVLGGFAFGMFFMAT), 358–378 (WAYGILIGAMCVMIRVVNPAY), and 381–401 (GMMLAILFANLFAPLFDHIVI).

This sequence belongs to the NqrB/RnfD family. Composed of six subunits; NqrA, NqrB, NqrC, NqrD, NqrE and NqrF. Requires FMN as cofactor.

The protein resides in the cell inner membrane. The enzyme catalyses a ubiquinone + n Na(+)(in) + NADH + H(+) = a ubiquinol + n Na(+)(out) + NAD(+). In terms of biological role, NQR complex catalyzes the reduction of ubiquinone-1 to ubiquinol by two successive reactions, coupled with the transport of Na(+) ions from the cytoplasm to the periplasm. NqrA to NqrE are probably involved in the second step, the conversion of ubisemiquinone to ubiquinol. This chain is Na(+)-translocating NADH-quinone reductase subunit B, found in Vibrio anguillarum (Listonella anguillarum).